We begin with the raw amino-acid sequence, 488 residues long: Mannosylglycerate hydrolase MGH2 (488 aa).

Residues Tyr94, 98 to 101 (WNWD), Tyr146, Gln167, and Gly227 each bind substrate. Asp229 functions as the Proton donor in the catalytic mechanism. Substrate contacts are provided by residues Arg262 and 415 to 416 (YW). Glu459 functions as the Proton acceptor in the catalytic mechanism.

The protein belongs to the glycosyl hydrolase 63 family.

The catalysed reaction is (2R)-2-O-(alpha-D-mannosyl)-glycerate + H2O = D-mannose + (R)-glycerate. It carries out the reaction (2R)-2-O-(alpha-D-glucopyranosyl)-glycerate + H2O = (R)-glycerate + D-glucose. Activity is not dependent on divalent cations, but it is enhanced by Mn(2+). Catalyzes the hydrolysis of alpha-D-mannosyl-glycerate (MG) to D-glycerate and D-mannose. Can also hydrolyze alpha-D-glucopyranosyl-glycerate (GG)with lower efficiency. The polypeptide is Mannosylglycerate hydrolase MGH2 (Selaginella moellendorffii (Spikemoss)).